The following is a 433-amino-acid chain: MGGSSSKESPRGGGSGRRYERSVSGSSSYSSAWDQSSYYQTPNHPSASPVSSYNSGRQTPKNLERKYSRIADNYRSIDEVTAALSHAGLESSNLIVGIDVTKSNEWTGARSFGRKSLHFIGTTPNPYQQAISIIGKTLSVFDEDNLIPCYGFGDATTHDQDVFSFNPNDTYCNGFEEVLMCYREIVPQLRLSGPTSFAPIIERAMTIVEESGGQYHVLLIIADGQVTRSVDTDNGGFSPQEQQTIDAIVRASEYPLSIVLVGVGDGPWDTMRQFDDNIPARAFDNFQFVNFTDIMSKNIDPARKEAEFALSALMEIPSQYKATLELGLLGQRTGHCPDRIALPPPTYATQSMRNSPRTSRSTSFQNKPYDNGVSSTPPSTTHNESQQQFCPVCLVSAKNMAFNCGHQTCAGCGEDLHVCPICRSSISVRIKLY.

The tract at residues 1-61 (MGGSSSKESP…SYNSGRQTPK (61 aa)) is disordered. The N-myristoyl glycine moiety is linked to residue glycine 2. A compositionally biased stretch (low complexity) spans 22 to 39 (SVSGSSSYSSAWDQSSYY). A compositionally biased stretch (polar residues) spans 40-61 (QTPNHPSASPVSSYNSGRQTPK). One can recognise a VWFA domain in the interval 93–313 (NLIVGIDVTK…KEAEFALSAL (221 aa)). A disordered region spans residues 340–383 (IALPPPTYATQSMRNSPRTSRSTSFQNKPYDNGVSSTPPSTTHN). The segment covering 347–383 (YATQSMRNSPRTSRSTSFQNKPYDNGVSSTPPSTTHN) has biased composition (polar residues). An RING-type zinc finger spans residues 390–423 (CPVCLVSAKNMAFNCGHQTCAGCGEDLHVCPICR).

In terms of assembly, interacts with PP2CA. In terms of processing, N-myristoylated.

The protein resides in the cell membrane. It catalyses the reaction S-ubiquitinyl-[E2 ubiquitin-conjugating enzyme]-L-cysteine + [acceptor protein]-L-lysine = [E2 ubiquitin-conjugating enzyme]-L-cysteine + N(6)-ubiquitinyl-[acceptor protein]-L-lysine.. In terms of biological role, together with RGLG1, mediates the ubiquitination and subsequent proteasomal degradation of the target protein PP2CA. Functions as a positive regulator of abscisic acid (ABA) signaling through ABA-dependent degradation of PP2CA, a major inhibitor of ABA signaling. This Arabidopsis thaliana (Mouse-ear cress) protein is E3 ubiquitin-protein ligase RGLG5.